Consider the following 124-residue polypeptide: Secretion system apparatus protein SsaP (124 aa).

This is Secretion system apparatus protein SsaP (ssaP) from Salmonella typhi.